The primary structure comprises 357 residues: UDP-N-acetylglucosamine--N-acetylmuramyl-(pentapeptide) pyrophosphoryl-undecaprenol N-acetylglucosamine transferase (357 aa).

Residues 13 to 15, R166, S196, and Q291 each bind UDP-N-acetyl-alpha-D-glucosamine; that span reads SAG.

This sequence belongs to the glycosyltransferase 28 family. MurG subfamily.

It is found in the cell membrane. The enzyme catalyses di-trans,octa-cis-undecaprenyl diphospho-N-acetyl-alpha-D-muramoyl-L-alanyl-D-glutamyl-meso-2,6-diaminopimeloyl-D-alanyl-D-alanine + UDP-N-acetyl-alpha-D-glucosamine = di-trans,octa-cis-undecaprenyl diphospho-[N-acetyl-alpha-D-glucosaminyl-(1-&gt;4)]-N-acetyl-alpha-D-muramoyl-L-alanyl-D-glutamyl-meso-2,6-diaminopimeloyl-D-alanyl-D-alanine + UDP + H(+). The protein operates within cell wall biogenesis; peptidoglycan biosynthesis. In terms of biological role, cell wall formation. Catalyzes the transfer of a GlcNAc subunit on undecaprenyl-pyrophosphoryl-MurNAc-pentapeptide (lipid intermediate I) to form undecaprenyl-pyrophosphoryl-MurNAc-(pentapeptide)GlcNAc (lipid intermediate II). The polypeptide is UDP-N-acetylglucosamine--N-acetylmuramyl-(pentapeptide) pyrophosphoryl-undecaprenol N-acetylglucosamine transferase (Clostridium perfringens (strain SM101 / Type A)).